We begin with the raw amino-acid sequence, 66 residues long: Toxin Boma6e (66 aa).

Residues 2–64 form the LCN-type CS-alpha/beta domain; the sequence is RDAYIAQNYN…VPLKVQGKCH (63 aa). 3 disulfide bridges follow: Cys-12/Cys-63, Cys-22/Cys-46, and Cys-26/Cys-48.

This sequence belongs to the long (3 C-C) scorpion toxin superfamily. Only three disulfide bridges can be formed, because only seven cysteines are present. Expressed by the venom gland.

The protein resides in the secreted. Binds voltage-independently at site-3 of sodium channels (Nav) and inhibits the inactivation of the activated channels, thereby blocking neuronal transmission. This Buthus occitanus mardochei (Moroccan scorpion) protein is Toxin Boma6e.